Consider the following 423-residue polypeptide: Lipid droplet-regulating VLDL assembly factor AUP1 (423 aa).

Over 1 to 19 (METRGIEQMFDFQRLPNDR) the chain is Cytoplasmic. Residues 20–40 (FILLLLLLYAPVGFCLMLLRI) lie within the membrane without spanning it. At 41-423 (FIGVHVFLVS…KHGLNKEDDL (383 aa)) the chain is on the cytoplasmic side. The 43-residue stretch at 304–346 (RIARLAQQVKEVLPDVPVSVITRDLLQTNCVDTTITNLLERTD) folds into the CUE domain. The interval 355–392 (TMPSGPGKAAASSTPSAMVSSPNLKPAAKSFGRSPIDR) is disordered. A compositionally biased stretch (polar residues) spans 365–377 (ASSTPSAMVSSPN).

The protein belongs to the AUP1 family.

The protein localises to the endoplasmic reticulum membrane. It is found in the lipid droplet. In terms of biological role, plays a role in the translocation of terminally misfolded proteins from the endoplasmic reticulum lumen to the cytoplasm and their degradation by the proteasome. Plays a role in lipid droplet formation. Induces lipid droplet clustering. The sequence is that of Lipid droplet-regulating VLDL assembly factor AUP1 from Danio rerio (Zebrafish).